A 171-amino-acid polypeptide reads, in one-letter code: Probable chorismate pyruvate-lyase (171 aa).

Positions 36, 78, 116, and 157 each coordinate substrate.

Belongs to the UbiC family.

The protein localises to the cytoplasm. It catalyses the reaction chorismate = 4-hydroxybenzoate + pyruvate. The protein operates within cofactor biosynthesis; ubiquinone biosynthesis. Removes the pyruvyl group from chorismate, with concomitant aromatization of the ring, to provide 4-hydroxybenzoate (4HB) for the ubiquinone pathway. In Bartonella henselae (strain ATCC 49882 / DSM 28221 / CCUG 30454 / Houston 1) (Rochalimaea henselae), this protein is Probable chorismate pyruvate-lyase.